A 304-amino-acid polypeptide reads, in one-letter code: Sulfate adenylyltransferase subunit 2 (304 aa).

This sequence belongs to the PAPS reductase family. CysD subfamily. Heterodimer composed of CysD, the smaller subunit, and CysN.

It catalyses the reaction sulfate + ATP + H(+) = adenosine 5'-phosphosulfate + diphosphate. Its pathway is sulfur metabolism; hydrogen sulfide biosynthesis; sulfite from sulfate: step 1/3. Functionally, with CysN forms the ATP sulfurylase (ATPS) that catalyzes the adenylation of sulfate producing adenosine 5'-phosphosulfate (APS) and diphosphate, the first enzymatic step in sulfur assimilation pathway. APS synthesis involves the formation of a high-energy phosphoric-sulfuric acid anhydride bond driven by GTP hydrolysis by CysN coupled to ATP hydrolysis by CysD. The chain is Sulfate adenylyltransferase subunit 2 from Halorhodospira halophila (strain DSM 244 / SL1) (Ectothiorhodospira halophila (strain DSM 244 / SL1)).